Consider the following 184-residue polypeptide: ADP-ribosylation factor-like protein 8b (184 aa).

An intramembrane region (note=Mediates targeting to membranes) is located at residues 1–18 (MGLWDALLNWLRSLFFKQ). GTP is bound by residues 29 to 34 (NAGKTS), 48 to 51 (MIPT), 70 to 74 (DLGGQ), and 129 to 132 (NKID).

The protein belongs to the small GTPase superfamily. Arf family. In terms of assembly, interacts with tubulin.

It localises to the late endosome membrane. Its subcellular location is the lysosome membrane. The protein localises to the cytoplasm. It is found in the cytoskeleton. The protein resides in the spindle. May play a role in lysosome motility. May play a role in chromosome segregation. Its function is as follows. (Microbial infection) Component of tomato mosaic virus (ToMV) RNA replication complexes. Required for tobamovirus multiplication, especially for efficient negative-strand RNA synthesis and viral RNA capping. The chain is ADP-ribosylation factor-like protein 8b from Arabidopsis thaliana (Mouse-ear cress).